A 165-amino-acid chain; its full sequence is Neuropeptide W (165 aa).

Residues 1-32 (MAWRPGERGAPASRPRLALLLLLLLLPLPSGA) form the signal peptide. Positions 65–165 (ALRAAAGPLA…GLPCLAPGPF (101 aa)) are excised as a propeptide. The tract at residues 106–165 (SQAGIPVRAPRSPRAPEPALEPESLDFSGAGQRLRRDVSRPAVDPAANRLGLPCLAPGPF) is disordered. Positions 113–127 (RAPRSPRAPEPALEP) are enriched in low complexity. O-linked (Xyl...) (chondroitin sulfate) serine glycosylation occurs at Ser133.

This sequence belongs to the neuropeptide B/W family. Detected in cerebrospinal fluid and urine (at protein level). Detected at high levels in the substantia nigra, fetal kidney and trachea; at lower levels in testis, uterus, ovary and placenta. Not detectable in many regions of the central nervous system. Also detected at high levels in lymphoblastic leukemia and colorectal adenocarcinoma.

Its subcellular location is the secreted. In terms of biological role, plays a regulatory role in the organization of neuroendocrine signals accessing the anterior pituitary gland. Stimulates water drinking and food intake. May play a role in the hypothalamic response to stress. NPW23 activates GPR7 and GPR8 more efficiently than NPW30. The protein is Neuropeptide W (NPW) of Homo sapiens (Human).